The following is a 387-amino-acid chain: Succinate--CoA ligase [ADP-forming] subunit beta (387 aa).

Residues 9–245 (KDLLESYGLK…KSQENAKELK (237 aa)) enclose the ATP-grasp domain. ATP contacts are provided by residues Lys46, 53–55 (GRG), Glu100, Tyr103, and Glu108. Residues Asn200 and Asp214 each coordinate Mg(2+). Substrate contacts are provided by residues Asn265 and 322 to 324 (GIV).

The protein belongs to the succinate/malate CoA ligase beta subunit family. As to quaternary structure, heterotetramer of two alpha and two beta subunits. It depends on Mg(2+) as a cofactor.

The enzyme catalyses succinate + ATP + CoA = succinyl-CoA + ADP + phosphate. It catalyses the reaction GTP + succinate + CoA = succinyl-CoA + GDP + phosphate. It participates in carbohydrate metabolism; tricarboxylic acid cycle; succinate from succinyl-CoA (ligase route): step 1/1. In terms of biological role, succinyl-CoA synthetase functions in the citric acid cycle (TCA), coupling the hydrolysis of succinyl-CoA to the synthesis of either ATP or GTP and thus represents the only step of substrate-level phosphorylation in the TCA. The beta subunit provides nucleotide specificity of the enzyme and binds the substrate succinate, while the binding sites for coenzyme A and phosphate are found in the alpha subunit. This Francisella tularensis subsp. tularensis (strain FSC 198) protein is Succinate--CoA ligase [ADP-forming] subunit beta.